Here is a 219-residue protein sequence, read N- to C-terminus: Small ribosomal subunit protein uS3c (219 aa).

The KH type-2 domain maps to 39-118 (IRSFIRKYIQ…RLNIVITKVE (80 aa)).

The protein belongs to the universal ribosomal protein uS3 family. In terms of assembly, part of the 30S ribosomal subunit.

It localises to the plastid. In Cuscuta obtusiflora (Peruvian dodder), this protein is Small ribosomal subunit protein uS3c (rps3).